Here is a 217-residue protein sequence, read N- to C-terminus: Probable chemoreceptor glutamine deamidase CheD (217 aa).

The tract at residues 194–217 (ATSGTAPSRGGELFTRASASRTPS) is disordered.

The protein belongs to the CheD family.

The enzyme catalyses L-glutaminyl-[protein] + H2O = L-glutamyl-[protein] + NH4(+). Its function is as follows. Probably deamidates glutamine residues to glutamate on methyl-accepting chemotaxis receptors (MCPs), playing an important role in chemotaxis. This chain is Probable chemoreceptor glutamine deamidase CheD, found in Cupriavidus pinatubonensis (strain JMP 134 / LMG 1197) (Cupriavidus necator (strain JMP 134)).